The sequence spans 203 residues: RNA annealing protein YRA2 (203 aa).

Methionine 1 is modified (N-acetylmethionine). Disordered stretches follow at residues 1–60 and 137–203; these read MDKA…REEP and QPQR…YMKG. Polar residues predominate over residues 11 to 20; sequence NSHTDSSSNH. Basic and acidic residues predominate over residues 47-60; it reads SRSKDRLYREREEP. Positions 64 to 138 constitute an RRM domain; sequence KRIRISKIPL…AKIEVEIYQP (75 aa). Over residues 139-153 the composition is skewed to basic residues; that stretch reads QRKHSRMNAHNRRKQ. Basic and acidic residues predominate over residues 154–164; it reads TAQEHGRDRPG. Positions 165–180 are enriched in basic residues; sequence SHYRQKPNRVSKKNKG.

The protein belongs to the YRA1 family. Associates with mRNPs. Interacts with YRA1.

The protein resides in the nucleus. In terms of biological role, involved in export of poly(A) mRNAs from the nucleus. Recruited to the coding sequences as well as poly-A sites of active genes. This Saccharomyces cerevisiae (strain YJM789) (Baker's yeast) protein is RNA annealing protein YRA2 (YRA2).